The sequence spans 327 residues: Biotin synthase (327 aa).

Residues 49-282 (FNKEKIDLCS…KKVIRLCGGR (234 aa)) enclose the Radical SAM core domain. [4Fe-4S] cluster contacts are provided by Cys-67, Cys-71, and Cys-74. Ser-110, Cys-142, Cys-201, and Arg-277 together coordinate [2Fe-2S] cluster.

The protein belongs to the radical SAM superfamily. Biotin synthase family. In terms of assembly, homodimer. Requires [4Fe-4S] cluster as cofactor. The cofactor is [2Fe-2S] cluster.

It carries out the reaction (4R,5S)-dethiobiotin + (sulfur carrier)-SH + 2 reduced [2Fe-2S]-[ferredoxin] + 2 S-adenosyl-L-methionine = (sulfur carrier)-H + biotin + 2 5'-deoxyadenosine + 2 L-methionine + 2 oxidized [2Fe-2S]-[ferredoxin]. The protein operates within cofactor biosynthesis; biotin biosynthesis; biotin from 7,8-diaminononanoate: step 2/2. Functionally, catalyzes the conversion of dethiobiotin (DTB) to biotin by the insertion of a sulfur atom into dethiobiotin via a radical-based mechanism. The chain is Biotin synthase from Methanococcus maripaludis (strain C7 / ATCC BAA-1331).